We begin with the raw amino-acid sequence, 350 residues long: Uroporphyrinogen decarboxylase (350 aa).

Residues 27–31 (RQAGR), F46, D76, Y152, S207, and H321 each bind substrate.

Belongs to the uroporphyrinogen decarboxylase family. As to quaternary structure, homodimer.

It is found in the cytoplasm. The catalysed reaction is uroporphyrinogen III + 4 H(+) = coproporphyrinogen III + 4 CO2. Its pathway is porphyrin-containing compound metabolism; protoporphyrin-IX biosynthesis; coproporphyrinogen-III from 5-aminolevulinate: step 4/4. Functionally, catalyzes the decarboxylation of four acetate groups of uroporphyrinogen-III to yield coproporphyrinogen-III. This chain is Uroporphyrinogen decarboxylase, found in Listeria monocytogenes serotype 4a (strain HCC23).